Reading from the N-terminus, the 190-residue chain is Threonylcarbamoyl-AMP synthase (190 aa).

Residues 7-190 enclose the YrdC-like domain; it reads NFVLADIVRA…ALTGKRFRQG (184 aa).

The protein belongs to the SUA5 family. TsaC subfamily.

The protein localises to the cytoplasm. It carries out the reaction L-threonine + hydrogencarbonate + ATP = L-threonylcarbamoyladenylate + diphosphate + H2O. Required for the formation of a threonylcarbamoyl group on adenosine at position 37 (t(6)A37) in tRNAs that read codons beginning with adenine. Catalyzes the conversion of L-threonine, HCO(3)(-)/CO(2) and ATP to give threonylcarbamoyl-AMP (TC-AMP) as the acyladenylate intermediate, with the release of diphosphate. This chain is Threonylcarbamoyl-AMP synthase, found in Yersinia pestis bv. Antiqua (strain Angola).